The chain runs to 341 residues: S-adenosylmethionine:tRNA ribosyltransferase-isomerase (341 aa).

It belongs to the QueA family. Monomer.

The protein localises to the cytoplasm. It carries out the reaction 7-aminomethyl-7-carbaguanosine(34) in tRNA + S-adenosyl-L-methionine = epoxyqueuosine(34) in tRNA + adenine + L-methionine + 2 H(+). It participates in tRNA modification; tRNA-queuosine biosynthesis. In terms of biological role, transfers and isomerizes the ribose moiety from AdoMet to the 7-aminomethyl group of 7-deazaguanine (preQ1-tRNA) to give epoxyqueuosine (oQ-tRNA). The protein is S-adenosylmethionine:tRNA ribosyltransferase-isomerase of Desulfitobacterium hafniense (strain DSM 10664 / DCB-2).